Here is a 284-residue protein sequence, read N- to C-terminus: tRNA (guanine-N(7)-)-methyltransferase (284 aa).

S-adenosyl-L-methionine contacts are provided by residues Gly102, 125-126 (EI), 160-161 (NT), and Cys180. Asp183 is a catalytic residue. 258–260 (TEE) contributes to the S-adenosyl-L-methionine binding site.

This sequence belongs to the class I-like SAM-binding methyltransferase superfamily. TrmB family. In terms of assembly, forms a complex with TRM82.

Its subcellular location is the nucleus. It carries out the reaction guanosine(46) in tRNA + S-adenosyl-L-methionine = N(7)-methylguanosine(46) in tRNA + S-adenosyl-L-homocysteine. It participates in tRNA modification; N(7)-methylguanine-tRNA biosynthesis. Its function is as follows. Catalyzes the formation of N(7)-methylguanine at position 46 (m7G46) in tRNA. The polypeptide is tRNA (guanine-N(7)-)-methyltransferase (Podospora anserina (strain S / ATCC MYA-4624 / DSM 980 / FGSC 10383) (Pleurage anserina)).